The sequence spans 269 residues: 5'-nucleotidase SurE (269 aa).

Residues Asp11, Asp12, Ser43, and Asn101 each contribute to the a divalent metal cation site.

The protein belongs to the SurE nucleotidase family. The cofactor is a divalent metal cation.

It localises to the cytoplasm. It catalyses the reaction a ribonucleoside 5'-phosphate + H2O = a ribonucleoside + phosphate. In terms of biological role, nucleotidase that shows phosphatase activity on nucleoside 5'-monophosphates. The polypeptide is 5'-nucleotidase SurE (Prochlorococcus marinus (strain MIT 9303)).